A 95-amino-acid chain; its full sequence is Selenoprotein K (95 aa).

A helical membrane pass occupies residues 20-42; the sequence is LSFLTDMFWGITDFIVMFFQSII. The tract at residues 48–95 is disordered; the sequence is RRGCQNSSSRTRFDDGRGPPGNPRRRMGRIDHNSGPNAPPMSGGGUGR. Position 93 (Sec93) is a non-standard amino acid, selenocysteine.

Belongs to the selenoprotein K family.

It is found in the endoplasmic reticulum membrane. The protein localises to the cell membrane. In terms of biological role, required for Ca(2+) flux in immune cells and plays a role in T-cell proliferation and in T-cell and neutrophil migration. Involved in endoplasmic reticulum-associated degradation (ERAD) of soluble glycosylated proteins. Required for cell surface expression of CD36 and involved in macrophage uptake of low-density lipoprotein and in foam cell formation. Required for palmitoylation. This Xenopus tropicalis (Western clawed frog) protein is Selenoprotein K (selenok).